Reading from the N-terminus, the 335-residue chain is Transmembrane protein 120B (335 aa).

Residues 1–39 (MSLQKCQEEWGELEKEFQQLQETHKVYKQKLEELNGLQN) adopt a coiled-coil conformation. 6 consecutive transmembrane segments (helical) span residues 100–122 (GLYLNLVLGNVNVTLLSNQAKFA), 130–150 (FKLYLTIILLLGAITCRFVLH), 157–177 (VFNFLLVWYYCTLTIRESILI), 193–213 (VSTFLSGVMLTWPDGLMYQIF), 268–288 (FLLPFLFFGHFWQLYNAITLF), and 300–320 (QVFVLALTFLLLFLGNFLTTL).

This sequence belongs to the TMEM120 family.

The protein localises to the nucleus inner membrane. Functionally, necessary for efficient adipogenesis. Does not show ion channel activity. This is Transmembrane protein 120B (tmem120b) from Xenopus tropicalis (Western clawed frog).